A 482-amino-acid polypeptide reads, in one-letter code: Complement C1r subcomponent-like protein (482 aa).

Positions 1–43 are cleaved as a signal peptide; the sequence is MSGFRGLVPELENSLWSSPTTSCMSKMCWWLLWGILHTCPTQA. In terms of domain architecture, CUB spans 44–166; sequence SVLLAQQSPQ…KGFLALYQAV (123 aa). 2 disulfides stabilise this stretch: cysteine 97–cysteine 115 and cysteine 190–cysteine 223. Residues 166–225 form the Sushi domain; the sequence is VAVNQPNGDTEAVTTPGAPKIQNHCQDPYYKADQTGTLSCPSSWKWKDRQDGGEVPECVP. One can recognise a Peptidase S1 domain in the interval 240–479; it reads TFGSSRAKLG…YMDWIKRVIE (240 aa). Active-site charge relay system residues include histidine 278 and aspartate 334. Asparagine 358 carries an N-linked (GlcNAc...) asparagine glycan. Cystine bridges form between cysteine 397–cysteine 416 and cysteine 427–cysteine 457. The Charge relay system role is filled by serine 431.

Belongs to the peptidase S1 family. Expressed in liver (at protein level).

It localises to the secreted. Functionally, mediates the proteolytic cleavage of HP/haptoglobin in the endoplasmic reticulum. In Mus musculus (Mouse), this protein is Complement C1r subcomponent-like protein (C1rl).